The chain runs to 184 residues: Ribosome-recycling factor (184 aa).

This sequence belongs to the RRF family.

It is found in the cytoplasm. Functionally, responsible for the release of ribosomes from messenger RNA at the termination of protein biosynthesis. May increase the efficiency of translation by recycling ribosomes from one round of translation to another. This chain is Ribosome-recycling factor, found in Oleidesulfovibrio alaskensis (strain ATCC BAA-1058 / DSM 17464 / G20) (Desulfovibrio alaskensis).